Reading from the N-terminus, the 95-residue chain is FMRFamide-like neuropeptides 16 (95 aa).

A signal peptide spans 1-24 (MSLSGFEFSSIIAVLLLLIQLSSA). A propeptide spanning residues 25–58 (AVLPVDYASQYGVASADEMTALPEEGSLFAERPA) is cleaved from the precursor. 3 positions are modified to phenylalanine amide: Phe-67, Phe-77, and Phe-87. A propeptide spanning residues 90-95 (SAPFEQ) is cleaved from the precursor.

The protein belongs to the FARP (FMRFamide related peptide) family.

It localises to the secreted. FMRFamides and FMRFamide-like peptides are neuropeptides. AQTFVRF-amide inhibits the activity of dissected pharyngeal myogenic muscle system. This chain is FMRFamide-like neuropeptides 16 (flp-16), found in Caenorhabditis briggsae.